The sequence spans 231 residues: MSGEENPASKPTPVQDVQGDGRWMSLHHRFVADSKDKEPEVVFIGDSLVQLMHQCEIWRELFSPLHALNFGIGGDGTQHVLWRLENGELEHIRPKIVVVWVGTNNHGHTAEQVTGGIKAIVQLVNERQPQARVVVLGLLPRGQHPNPLREKNRQVNELVRAALAGHPRAHFLDADPGFVHSDGTISHHDMYDYLHLSRLGYTPVCRALHSLLLRLLAQDQGQGAPLLEPAP.

Serine 2 is subject to N-acetylserine. Phosphoserine is present on serine 2. Catalysis depends on residues serine 47, aspartate 192, and histidine 195.

It belongs to the 'GDSL' lipolytic enzyme family. Platelet-activating factor acetylhydrolase IB beta/gamma subunits subfamily. Forms a catalytic dimer which is either homodimer (alpha1/alpha1 homodimer) or heterodimer with PAFAH1B2 (alpha1/alpha2 heterodimer). Component of the cytosolic (PAF-AH (I)) heterotetrameric enzyme, which is composed of PAFAH1B1 (beta), PAFAH1B2 (alpha2) and PAFAH1B3 (alpha1) subunits. The catalytic activity of the enzyme resides in the alpha1 (PAFAH1B3) and alpha2 (PAFAH1B2) subunits, whereas the beta subunit (PAFAH1B1) has regulatory activity. Trimer formation is not essential for the catalytic activity. Interacts with VLDLR; this interaction may modulate the Reelin pathway. As to expression, in the adult, expressed in brain, skeletal muscle, kidney, thymus, spleen, colon, testis, ovary and peripheral blood leukocytes. In the fetus, highest expression occurs in brain.

Its subcellular location is the cytoplasm. It carries out the reaction a 1-O-alkyl-2-acetyl-sn-glycero-3-phosphocholine + H2O = a 1-O-alkyl-sn-glycero-3-phosphocholine + acetate + H(+). The enzyme catalyses 1-O-hexadecyl-2-acetyl-sn-glycero-3-phosphocholine + H2O = 1-O-hexadecyl-sn-glycero-3-phosphocholine + acetate + H(+). The catalysed reaction is 1-O-hexadecyl-2-acetyl-sn-glycero-3-phosphate + H2O = 1-O-hexadecyl-sn-glycero-3-phosphate + acetate + H(+). Its activity is regulated as follows. Beta subunit (PAFAH1B1) inhibits the acetylhydrolase activity of the alpha1/alpha1 catalytic homodimer. Its function is as follows. Alpha1 catalytic subunit of the cytosolic type I platelet-activating factor (PAF) acetylhydrolase (PAF-AH (I)) heterotetrameric enzyme that catalyzes the hydrolyze of the acetyl group at the sn-2 position of PAF and its analogs and modulates the action of PAF. The activity and substrate specificity of PAF-AH (I) are affected by its subunit composition. Both alpha1/alpha1 homodimer (PAFAH1B3/PAFAH1B3 homodimer) and alpha1/alpha2 heterodimer(PAFAH1B3/PAFAH1B2 heterodimer) hydrolyze 1-O-alkyl-2-acetyl-sn-glycero-3-phosphoric acid (AAGPA) more efficiently than PAF, but they have little hydrolytic activity towards 1-O-alkyl-2-acetyl-sn-glycero-3-phosphorylethanolamine (AAGPE). Plays an important role during the development of brain. The chain is Platelet-activating factor acetylhydrolase IB subunit alpha1 from Homo sapiens (Human).